Consider the following 872-residue polypeptide: Alanine--tRNA ligase (872 aa).

Residues histidine 571, histidine 575, cysteine 674, and histidine 678 each coordinate Zn(2+).

Belongs to the class-II aminoacyl-tRNA synthetase family. Zn(2+) is required as a cofactor.

It localises to the cytoplasm. The catalysed reaction is tRNA(Ala) + L-alanine + ATP = L-alanyl-tRNA(Ala) + AMP + diphosphate. Its function is as follows. Catalyzes the attachment of alanine to tRNA(Ala) in a two-step reaction: alanine is first activated by ATP to form Ala-AMP and then transferred to the acceptor end of tRNA(Ala). Also edits incorrectly charged Ser-tRNA(Ala) and Gly-tRNA(Ala) via its editing domain. This chain is Alanine--tRNA ligase, found in Symbiobacterium thermophilum (strain DSM 24528 / JCM 14929 / IAM 14863 / T).